The following is a 261-amino-acid chain: Cytochrome c oxidase subunit 3 (261 aa).

Over 1–15 (MTHQLHAYHMVKPSP) the chain is Mitochondrial matrix. Residues 16–34 (WPLTGALSAFLLTSGLIMW) form a helical membrane-spanning segment. The Mitochondrial intermembrane portion of the chain corresponds to 35–40 (FHFYST). Residues 41-66 (ALLTLGLLTNVLTMYQWWRDIIREST) traverse the membrane as a helical segment. At 67–72 (YQGHHT) the chain is on the mitochondrial matrix side. A helical membrane pass occupies residues 73–105 (TPVQKSLRYGMTLFIISEVFFFAGFFWAFYHSS). Residues 106-128 (LAPTPRLGCHWPPTGITPLNPLE) are Mitochondrial intermembrane-facing. A helical transmembrane segment spans residues 129-152 (VPLLNTSVLLASGVTITWAHHSLM). Topologically, residues 153–155 (NGN) are mitochondrial matrix. Residues 156 to 183 (RKQTIQALLITILLGTYFTLVQISEYFE) form a helical membrane-spanning segment. Over 184-190 (APFTISD) the chain is Mitochondrial intermembrane. The chain crosses the membrane as a helical span at residues 191–223 (GIYGSTFFVATGFHGLHVIIGSTFLLICLIRQL). At 224 to 232 (FYHFTPSHH) the chain is on the mitochondrial matrix side. The chain crosses the membrane as a helical span at residues 233 to 256 (FGFEAAAWYWHFVDVIWLFLYISI). The Mitochondrial intermembrane portion of the chain corresponds to 257–261 (YWWGS).

The protein belongs to the cytochrome c oxidase subunit 3 family. As to quaternary structure, component of the cytochrome c oxidase (complex IV, CIV), a multisubunit enzyme composed of 14 subunits. The complex is composed of a catalytic core of 3 subunits MT-CO1, MT-CO2 and MT-CO3, encoded in the mitochondrial DNA, and 11 supernumerary subunits COX4I, COX5A, COX5B, COX6A, COX6B, COX6C, COX7A, COX7B, COX7C, COX8 and NDUFA4, which are encoded in the nuclear genome. The complex exists as a monomer or a dimer and forms supercomplexes (SCs) in the inner mitochondrial membrane with NADH-ubiquinone oxidoreductase (complex I, CI) and ubiquinol-cytochrome c oxidoreductase (cytochrome b-c1 complex, complex III, CIII), resulting in different assemblies (supercomplex SCI(1)III(2)IV(1) and megacomplex MCI(2)III(2)IV(2)).

It is found in the mitochondrion inner membrane. The enzyme catalyses 4 Fe(II)-[cytochrome c] + O2 + 8 H(+)(in) = 4 Fe(III)-[cytochrome c] + 2 H2O + 4 H(+)(out). Functionally, component of the cytochrome c oxidase, the last enzyme in the mitochondrial electron transport chain which drives oxidative phosphorylation. The respiratory chain contains 3 multisubunit complexes succinate dehydrogenase (complex II, CII), ubiquinol-cytochrome c oxidoreductase (cytochrome b-c1 complex, complex III, CIII) and cytochrome c oxidase (complex IV, CIV), that cooperate to transfer electrons derived from NADH and succinate to molecular oxygen, creating an electrochemical gradient over the inner membrane that drives transmembrane transport and the ATP synthase. Cytochrome c oxidase is the component of the respiratory chain that catalyzes the reduction of oxygen to water. Electrons originating from reduced cytochrome c in the intermembrane space (IMS) are transferred via the dinuclear copper A center (CU(A)) of subunit 2 and heme A of subunit 1 to the active site in subunit 1, a binuclear center (BNC) formed by heme A3 and copper B (CU(B)). The BNC reduces molecular oxygen to 2 water molecules using 4 electrons from cytochrome c in the IMS and 4 protons from the mitochondrial matrix. This Papio hamadryas (Hamadryas baboon) protein is Cytochrome c oxidase subunit 3 (MT-CO3).